The sequence spans 98 residues: Citrate lyase acyl carrier protein (98 aa).

Ser-14 bears the O-(phosphoribosyl dephospho-coenzyme A)serine mark.

Belongs to the CitD family. In terms of assembly, oligomer with a subunit composition of (alpha,beta,gamma)6.

The protein resides in the cytoplasm. Covalent carrier of the coenzyme of citrate lyase. This is Citrate lyase acyl carrier protein from Shigella boydii serotype 18 (strain CDC 3083-94 / BS512).